Here is a 146-residue protein sequence, read N- to C-terminus: Hemoglobin subunit beta (146 aa).

Val-1 bears the N-acetylvaline mark. In terms of domain architecture, Globin spans 2-146 (HLTAEEKAAV…VANALAHKYH (145 aa)). At Thr-12 the chain carries Phosphothreonine. Residue Ser-44 is modified to Phosphoserine. An N6-acetyllysine modification is found at Lys-59. A heme b-binding site is contributed by His-63. An N6-acetyllysine modification is found at Lys-82. Heme b is bound at residue His-92. Cys-93 carries the S-nitrosocysteine modification. Lys-144 is subject to N6-acetyllysine.

It belongs to the globin family. Heterotetramer of two alpha chains and two beta chains. In terms of tissue distribution, red blood cells.

In terms of biological role, involved in oxygen transport from the lung to the various peripheral tissues. The chain is Hemoglobin subunit beta (HBB) from Mellivora capensis (Ratel).